A 1846-amino-acid polypeptide reads, in one-letter code: Unconventional myosin-Vb (1846 aa).

A Myosin N-terminal SH3-like domain is found at 8-60; that stretch reads SRYTRVWIPDPDEVWRSAELTKDYKDGDESLQLRLEDDTILDYPIDVQNNQVP. Residues 21 to 40 form a requires for interaction with LIMA1 region; it reads VWRSAELTKDYKDGDESLQL. A Myosin motor domain is found at 69–763; the sequence is VGENDLTALS…QVAYLEKLRA (695 aa). 163-170 is a binding site for ATP; the sequence is GESGAGKT. Residues 599–629 form a disordered region; the sequence is VPATNTAKSRSSSKINVRSSRPLMKAPNKEH. Residues 607-619 are compositionally biased toward low complexity; sequence SRSSSKINVRSSR. The segment at 641-663 is actin-binding; that stretch reads LNLLMETLNATTPHYVRCIKPND. IQ domains lie at 767–788, 789–813, 814–837, 838–861, 862–884, and 885–914; these read REAT…KYRR, LRAA…EHLR, RTRA…YCRV, RRAA…PPVL, TEHK…HFQR, and QRDA…EARS. 2 coiled-coil regions span residues 915-1272 and 1334-1450; these read AEHL…ADQR and LKQV…RHHE. Positions 1088 to 1122 are disordered; sequence RDEQQTPGHRKNPSNQSSLESDSNYPSISTSEIGD. Positions 1100–1120 are enriched in polar residues; sequence PSNQSSLESDSNYPSISTSEI. Ser1444 is modified (phosphoserine). The Dilute domain maps to 1524–1801; the sequence is SSTINGIKKV…IRTIQAQLQE (278 aa).

It belongs to the TRAFAC class myosin-kinesin ATPase superfamily. Myosin family. As to quaternary structure, component of the CART complex, at least composed of ACTN4, HGS/HRS, MYO5B and TRIM3. Interacts with RAB11FIP2. Interacts with RAB11A and RAB8A. Found in a complex with CFTR and RAB11A. Interacts with NPC1L1. Interacts with LIMA1.

The protein localises to the cytoplasm. In terms of biological role, may be involved in vesicular trafficking via its association with the CART complex. The CART complex is necessary for efficient transferrin receptor recycling but not for EGFR degradation. Required in a complex with RAB11A and RAB11FIP2 for the transport of NPC1L1 to the plasma membrane. Together with RAB11A participates in CFTR trafficking to the plasma membrane and TF (transferrin) recycling in nonpolarized cells. Together with RAB11A and RAB8A participates in epithelial cell polarization. Together with RAB25 regulates transcytosis. Required for proper localization of bile salt export pump ABCB11 at the apical/canalicular plasma membrane of hepatocytes. The chain is Unconventional myosin-Vb (Myo5b) from Rattus norvegicus (Rat).